The sequence spans 181 residues: Transmembrane protein 47 (181 aa).

At alanine 2 the chain carries N-acetylalanine. Helical transmembrane passes span leucine 21–proline 41, alanine 83–isoleucine 103, valine 115–isoleucine 135, and glycine 152–leucine 172.

It belongs to the TMEM47 family. As to quaternary structure, interacts with CTNNB1, CTNNA1, PRKCI, PARD6B, FYB1. Expressed in adult brain, fetal brain, cerebellum, heart, lung, prostate and thyroid.

The protein localises to the membrane. It localises to the cell junction. It is found in the adherens junction. Regulates cell junction organization in epithelial cells. May play a role in the transition from adherens junction to tight junction assembly. May regulate F-actin polymerization required for tight junctional localization dynamics and affect the junctional localization of PARD6B. During podocyte differentiation may negatively regulate activity of FYN and subsequently the abundance of nephrin. This chain is Transmembrane protein 47 (TMEM47), found in Homo sapiens (Human).